We begin with the raw amino-acid sequence, 314 residues long: DNA-directed RNA polymerase subunit alpha (314 aa).

The interval 1–228 (MIEIEKPRIE…EHLNIFVDLT (228 aa)) is alpha N-terminal domain (alpha-NTD). An alpha C-terminal domain (alpha-CTD) region spans residues 245–314 (KEKVLEMSIE…DLGLGLRKED (70 aa)).

The protein belongs to the RNA polymerase alpha chain family. As to quaternary structure, homodimer. The RNAP catalytic core consists of 2 alpha, 1 beta, 1 beta' and 1 omega subunit. When a sigma factor is associated with the core the holoenzyme is formed, which can initiate transcription.

It catalyses the reaction RNA(n) + a ribonucleoside 5'-triphosphate = RNA(n+1) + diphosphate. In terms of biological role, DNA-dependent RNA polymerase catalyzes the transcription of DNA into RNA using the four ribonucleoside triphosphates as substrates. This is DNA-directed RNA polymerase subunit alpha from Macrococcus caseolyticus (strain JCSC5402) (Macrococcoides caseolyticum).